A 71-amino-acid polypeptide reads, in one-letter code: DNA-directed RNA polymerase subunit epsilon (71 aa).

The protein belongs to the RNA polymerase subunit epsilon family. As to quaternary structure, RNAP is composed of a core of 2 alpha, a beta and a beta' subunit. The core is associated with a delta subunit, and at least one of epsilon or omega. When a sigma factor is associated with the core the holoenzyme is formed, which can initiate transcription.

It catalyses the reaction RNA(n) + a ribonucleoside 5'-triphosphate = RNA(n+1) + diphosphate. Functionally, a non-essential component of RNA polymerase (RNAP). The sequence is that of DNA-directed RNA polymerase subunit epsilon from Anoxybacillus flavithermus (strain DSM 21510 / WK1).